The chain runs to 82 residues: ATP synthase subunit c, chloroplastic (82 aa).

Transmembrane regions (helical) follow at residues 4–24 (IISA…AIGP) and 57–77 (LAFM…LLFA).

The protein belongs to the ATPase C chain family. As to quaternary structure, F-type ATPases have 2 components, F(1) - the catalytic core - and F(0) - the membrane proton channel. F(1) has five subunits: alpha(3), beta(3), gamma(1), delta(1), epsilon(1). F(0) has four main subunits: a(1), b(1), b'(1) and c(10-14). The alpha and beta chains form an alternating ring which encloses part of the gamma chain. F(1) is attached to F(0) by a central stalk formed by the gamma and epsilon chains, while a peripheral stalk is formed by the delta, b and b' chains.

The protein localises to the plastid. It localises to the chloroplast thylakoid membrane. In terms of biological role, f(1)F(0) ATP synthase produces ATP from ADP in the presence of a proton or sodium gradient. F-type ATPases consist of two structural domains, F(1) containing the extramembraneous catalytic core and F(0) containing the membrane proton channel, linked together by a central stalk and a peripheral stalk. During catalysis, ATP synthesis in the catalytic domain of F(1) is coupled via a rotary mechanism of the central stalk subunits to proton translocation. Its function is as follows. Key component of the F(0) channel; it plays a direct role in translocation across the membrane. A homomeric c-ring of between 10-14 subunits forms the central stalk rotor element with the F(1) delta and epsilon subunits. This chain is ATP synthase subunit c, chloroplastic, found in Thalassiosira pseudonana (Marine diatom).